The sequence spans 157 residues: 6,7-dimethyl-8-ribityllumazine synthase 1 (157 aa).

Residues Phe-22, 53 to 55 (ALE), and 82 to 84 (TVI) contribute to the 5-amino-6-(D-ribitylamino)uracil site. 87–88 (ET) contacts (2S)-2-hydroxy-3-oxobutyl phosphate. His-90 functions as the Proton donor in the catalytic mechanism. Asn-115 contributes to the 5-amino-6-(D-ribitylamino)uracil binding site. Arg-129 provides a ligand contact to (2S)-2-hydroxy-3-oxobutyl phosphate.

The protein belongs to the DMRL synthase family. As to quaternary structure, homopentamer.

It carries out the reaction (2S)-2-hydroxy-3-oxobutyl phosphate + 5-amino-6-(D-ribitylamino)uracil = 6,7-dimethyl-8-(1-D-ribityl)lumazine + phosphate + 2 H2O + H(+). It participates in cofactor biosynthesis; riboflavin biosynthesis; riboflavin from 2-hydroxy-3-oxobutyl phosphate and 5-amino-6-(D-ribitylamino)uracil: step 1/2. Its function is as follows. Catalyzes the formation of 6,7-dimethyl-8-ribityllumazine by condensation of 5-amino-6-(D-ribitylamino)uracil with 3,4-dihydroxy-2-butanone 4-phosphate. This is the penultimate step in the biosynthesis of riboflavin. This is 6,7-dimethyl-8-ribityllumazine synthase 1 (ribH1) from Brucella melitensis biotype 1 (strain ATCC 23456 / CCUG 17765 / NCTC 10094 / 16M).